The sequence spans 597 residues: (E)-sabinene hydrate synthase, chloroplastic (597 aa).

The N-terminal 47 residues, 1–47 (MSTISINHVGILRNPLQCKNKRTSINKPWSLSLPRSSPASRLVKPCR), are a transit peptide targeting the chloroplast. 2 residues coordinate Mn(2+): D353 and D357. The DDXXD motif signature appears at 353-357 (DDVYD). 2 homodimerization regions span residues 359-365 (YGTLDEL) and 431-468 (EAGWYENGYTPSLEEYLTNATISIGVPPIVLPVEVSLP). Residues D495 and E503 each coordinate Mn(2+).

This sequence belongs to the terpene synthase family. Homodimer. The cofactor is Mn(2+). Mg(2+) serves as cofactor.

It localises to the plastid. The protein localises to the chloroplast. It catalyses the reaction (2E)-geranyl diphosphate + H2O = sabinene hydrate + diphosphate. It participates in secondary metabolite biosynthesis; terpenoid biosynthesis. In terms of biological role, involved in the biosynthesis of phenolic monoterpenes natural products. Monoterpene synthase which catalyzes the conversion of geranyl diphosphate (GPP) to sabinene hydrate, specifically (E)-sabinene hydrate, and the formation of minor amounts and traces of several other monoterpenes (e.g. mainly alpha-pinene, limonene and alpha-terpineol). The chain is (E)-sabinene hydrate synthase, chloroplastic from Thymus vulgaris (Thyme).